Reading from the N-terminus, the 640-residue chain is 2-hydroxyacyl-CoA lyase 2 (640 aa).

A helical membrane pass occupies residues 2-22 (VLFLIIAAIIIGLLLWKWLDV). Glutamate 102 serves as a coordination point for thiamine diphosphate. The interval 477–557 (DFVGSAAYIV…VIGIVGNDAC (81 aa)) is thiamine pyrophosphate binding. Residues aspartate 528 and asparagine 554 each contribute to the Mg(2+) site.

This sequence belongs to the TPP enzyme family. The cofactor is Mg(2+). Thiamine diphosphate serves as cofactor.

The protein localises to the endoplasmic reticulum membrane. It carries out the reaction 2-hydroxyoctadecanoyl-CoA = heptadecanal + formyl-CoA. It catalyses the reaction (2R)-hydroxyhexadecanoyl-CoA = pentadecanal + formyl-CoA. Its function is as follows. Endoplasmic reticulum 2-OH acyl-CoA lyase involved in the cleavage (C1 removal) reaction in the fatty acid alpha-oxydation in a thiamine pyrophosphate (TPP)-dependent manner. This Caenorhabditis elegans protein is 2-hydroxyacyl-CoA lyase 2.